The primary structure comprises 478 residues: Serine hydroxymethyltransferase (478 aa).

Residues Leu-161 and 165 to 167 contribute to the (6S)-5,6,7,8-tetrahydrofolate site; that span reads GHL. Residue Lys-273 is modified to N6-(pyridoxal phosphate)lysine. Position 291 (Glu-291) interacts with (6S)-5,6,7,8-tetrahydrofolate.

This sequence belongs to the SHMT family. Homodimer. Pyridoxal 5'-phosphate serves as cofactor.

Its subcellular location is the cytoplasm. The catalysed reaction is (6R)-5,10-methylene-5,6,7,8-tetrahydrofolate + glycine + H2O = (6S)-5,6,7,8-tetrahydrofolate + L-serine. It participates in one-carbon metabolism; tetrahydrofolate interconversion. The protein operates within amino-acid biosynthesis; glycine biosynthesis; glycine from L-serine: step 1/1. Catalyzes the reversible interconversion of serine and glycine with tetrahydrofolate (THF) serving as the one-carbon carrier. This reaction serves as the major source of one-carbon groups required for the biosynthesis of purines, thymidylate, methionine, and other important biomolecules. Also exhibits THF-independent aldolase activity toward beta-hydroxyamino acids, producing glycine and aldehydes, via a retro-aldol mechanism. The protein is Serine hydroxymethyltransferase of Salinispora tropica (strain ATCC BAA-916 / DSM 44818 / JCM 13857 / NBRC 105044 / CNB-440).